The sequence spans 185 residues: dCTP deaminase (185 aa).

DCTP is bound by residues 108 to 113 (KSTYAR), 132 to 134 (TLE), Gln-153, Tyr-167, and Gln-177. The active-site Proton donor/acceptor is Glu-134.

This sequence belongs to the dCTP deaminase family. In terms of assembly, homotrimer.

It catalyses the reaction dCTP + H2O + H(+) = dUTP + NH4(+). It functions in the pathway pyrimidine metabolism; dUMP biosynthesis; dUMP from dCTP (dUTP route): step 1/2. In terms of biological role, catalyzes the deamination of dCTP to dUTP. The chain is dCTP deaminase from Pelagibacter ubique (strain HTCC1062).